The sequence spans 107 residues: U1-lycotoxin-Ls1m (107 aa).

The first 20 residues, 1 to 20 (MMKVLVVVALLVTLISYSSS), serve as a signal peptide directing secretion. Positions 21-41 (EGIDDLEADELLSLMANEQTR) are excised as a propeptide. Disulfide bonds link cysteine 44–cysteine 59, cysteine 51–cysteine 68, cysteine 58–cysteine 86, and cysteine 70–cysteine 84.

It belongs to the neurotoxin 19 (CSTX) family. 04 (U1-Lctx) subfamily. In terms of tissue distribution, expressed by the venom gland.

It is found in the secreted. The polypeptide is U1-lycotoxin-Ls1m (Lycosa singoriensis (Wolf spider)).